A 346-amino-acid polypeptide reads, in one-letter code: GTPase Obg (346 aa).

Residues 1–159 (MKFLDSAKIY…RTVLLRLKLI (159 aa)) enclose the Obg domain. Positions 160-327 (ADAGLVGLPN…ALRAVLAEID (168 aa)) constitute an OBG-type G domain. GTP contacts are provided by residues 166–173 (GLPNAGKS), 191–195 (FTTLN), 212–215 (DIPG), 279–282 (SKVD), and 308–310 (SAA). Mg(2+) contacts are provided by Ser-173 and Thr-193.

This sequence belongs to the TRAFAC class OBG-HflX-like GTPase superfamily. OBG GTPase family. Monomer. Mg(2+) serves as cofactor.

It is found in the cytoplasm. In terms of biological role, an essential GTPase which binds GTP, GDP and possibly (p)ppGpp with moderate affinity, with high nucleotide exchange rates and a fairly low GTP hydrolysis rate. Plays a role in control of the cell cycle, stress response, ribosome biogenesis and in those bacteria that undergo differentiation, in morphogenesis control. In Methylocella silvestris (strain DSM 15510 / CIP 108128 / LMG 27833 / NCIMB 13906 / BL2), this protein is GTPase Obg.